A 1112-amino-acid polypeptide reads, in one-letter code: cGMP-inhibited 3',5'-cyclic phosphodiesterase 3B (1112 aa).

The segment covering Met1–Ala10 has biased composition (basic and acidic residues). The interval Met1 to Glu25 is interaction with RAPGEF3. Residues Met1 to Ser26 are disordered. The residue at position 13 (Ser13) is a Phosphoserine. Helical transmembrane passes span Phe88–Leu108, His117–Thr137, Trp152–Trp172, Ala192–His212, Val220–Leu240, and Leu247–Phe267. Ser295 carries the phosphoserine; by PKB/AKT1 or PKB/AKT2 modification. Phosphoserine occurs at positions 296 and 442. The tract at residues Glu418–Ser471 is disordered. Residues Leu428–Ser445 show a composition bias toward polar residues. The tract at residues Pro436–Asn460 is interaction with PIK3R6. Residues Ser454–Gln466 show a composition bias toward basic and acidic residues. The 429-residue stretch at Thr651–Glu1079 folds into the PDEase domain. Catalysis depends on His737, which acts as the Proton donor. His737 serves as a coordination point for AMP. The Mg(2+) site is built by His741, His821, Asp822, and Asp937. AMP contacts are provided by Asp822, Asp937, and Gln988. Acidic residues-rich tracts occupy residues Glu1017–Glu1041 and Gln1103–Glu1112. 2 disordered regions span residues Glu1017–Arg1051 and Glu1092–Glu1112.

It belongs to the cyclic nucleotide phosphodiesterase family. PDE3 subfamily. As to quaternary structure, homodimer. Interacts with PIK3CG; regulates PDE3B activity and thereby cAMP levels in cells. Interacts with RAPGEF3 and PIK3R6; form a signaling complex that regulates phosphatidylinositol 3-kinase gamma in angiogenesis. Interacts with ABHD15; this interaction regulates PDE3B's stability and expression and, thereby, impacts the antilipolytic action of insulin. Requires Mg(2+) as cofactor. Mn(2+) is required as a cofactor. Post-translationally, phosphorylation at Ser-295 mediates insulin-induced activation of PDE3B. Abundant in adipose tissues.

Its subcellular location is the membrane. The enzyme catalyses a nucleoside 3',5'-cyclic phosphate + H2O = a nucleoside 5'-phosphate + H(+). The catalysed reaction is 3',5'-cyclic AMP + H2O = AMP + H(+). It carries out the reaction 3',5'-cyclic GMP + H2O = GMP + H(+). Inhibited by cGMP. Functionally, cyclic nucleotide phosphodiesterase with a dual-specificity for the second messengers cAMP and cGMP, which are key regulators of many important physiological process. Regulates angiogenesis by inhibiting the cAMP-dependent guanine nucleotide exchange factor RAPGEF3 and downstream phosphatidylinositol 3-kinase gamma-mediated signaling. Controls cardiac contractility by reducing cAMP concentration in cardiocytes. The protein is cGMP-inhibited 3',5'-cyclic phosphodiesterase 3B of Homo sapiens (Human).